Reading from the N-terminus, the 375-residue chain is CCN family member 1 (375 aa).

The first 22 residues, 1 to 22, serve as a signal peptide directing secretion; that stretch reads MGSAGARPALAAALLCLARLAL. The region spanning 23-94 is the IGFBP N-terminal domain; that stretch reads GSPCPAVCQC…AATNGICRAQ (72 aa). 6 disulfide bridges follow: Cys-26–Cys-50, Cys-30–Cys-52, Cys-32–Cys-53, Cys-39–Cys-56, Cys-64–Cys-78, and Cys-70–Cys-91. The 67-residue stretch at 98–164 folds into the VWFC domain; it reads RPCEYNSKIY…GQCCEEWVCD (67 aa). A TSP type-1 domain is found at 223–268; that stretch reads KCIVQTTSWSQCSKTCGTGISTRVTNDNPDCKLIKETRICEVRPCG. The tract at residues 274–310 is heparin-binding; the sequence is SLKKGKKCTKTKKSPSPVRFTYAGCSSVKKYRPKYCG. Cystine bridges form between Cys-281–Cys-318, Cys-298–Cys-332, Cys-309–Cys-348, Cys-312–Cys-350, and Cys-317–Cys-354. The CTCK domain occupies 281–355; that stretch reads CTKTKKSPSP…QSCRCNYNCP (75 aa).

Belongs to the CCN family.

The protein resides in the secreted. In terms of biological role, probable secreted regulatory protein. The sequence is that of CCN family member 1 (CCN1) from Gallus gallus (Chicken).